A 468-amino-acid polypeptide reads, in one-letter code: Na(+)/H(+) antiporter NhaA (468 aa).

10 consecutive transmembrane segments (helical) span residues 32–52, 83–103, 119–139, 148–168, 178–198, 205–225, 320–340, 354–374, 397–417, and 428–448; these read FLHIEAVSGIVLLAAAGIALL, LHFWINDALMTIFFLVVGMEI, ALPMAAALGGVIVPALIYLAI, GWAVPTATDIAFAVGVLALLG, FLLALAIIDDIVAVLIIAVAF, GGFLVAGTGILMVLGLQWIGV, ALHPWVAYLVMPLFALANAGV, GAMFGVVLALVVGKPLGIVSV, LVGLLAGIGFTMSIFIATLAF, and LGVLLASAIAATIGLTWGFIY.

This sequence belongs to the NhaA Na(+)/H(+) (TC 2.A.33) antiporter family.

The protein localises to the cell inner membrane. It carries out the reaction Na(+)(in) + 2 H(+)(out) = Na(+)(out) + 2 H(+)(in). Functionally, na(+)/H(+) antiporter that extrudes sodium in exchange for external protons. The polypeptide is Na(+)/H(+) antiporter NhaA (Cupriavidus necator (strain ATCC 17699 / DSM 428 / KCTC 22496 / NCIMB 10442 / H16 / Stanier 337) (Ralstonia eutropha)).